Here is a 175-residue protein sequence, read N- to C-terminus: Pituitary adenylate cyclase-activating polypeptide (175 aa).

Positions 1–24 (MTMCSGARLALLVYGIIMHNSVSC) are cleaved as a signal peptide. Residues 25–78 (SPAAGLSFPGIRPEEEAYDQDGNPLQDFYDWDPPGAGSPASALRDAYALYYPAD) constitute a propeptide that is removed on maturation. An important for receptor binding region spans residues 149–157 (VKKYLAAVL). Residue Leu157 is modified to Leucine amide. Lys168 is modified (lysine amide). The propeptide occupies 172 to 175 (IAYL).

It belongs to the glucagon family.

It localises to the secreted. Its function is as follows. PACAP is a neuropeptide involved in diverse array of physiological processes through activating the PACAP subfamily of class B1 G protein-coupled receptors: VIP receptor 1 (VIPR1), VIP receptor 2 (VIPR2), and PACAP type I receptor (ADCYAP1R1). Exerts neuroprotective and general cytoprotective effects due to anti-apoptotic, anti-inflammatory, and antioxidant actions. Promotes neuron projection development through the RAPGEF2/Rap1/B-Raf/ERK pathway. In chromaffin cells, induces long-lasting increase of intracellular calcium concentrations and neuroendocrine secretion. Involved in the control of glucose homeostasis, induces insulin secretion by pancreatic beta cells. PACAP exists in two bioactive forms from proteolysis of the same precursor protein, PACAP27 and PACAP38, which differ by eleven amino acid residues in the C-terminus. In Rattus norvegicus (Rat), this protein is Pituitary adenylate cyclase-activating polypeptide (Adcyap1).